The chain runs to 540 residues: Chaperonin GroEL (540 aa).

Residues 30–33 (TLGP), 87–91 (DGTTT), glycine 415, and aspartate 496 each bind ATP.

It belongs to the chaperonin (HSP60) family. Forms a cylinder of 14 subunits composed of two heptameric rings stacked back-to-back. Interacts with the co-chaperonin GroES.

Its subcellular location is the cytoplasm. It carries out the reaction ATP + H2O + a folded polypeptide = ADP + phosphate + an unfolded polypeptide.. Functionally, together with its co-chaperonin GroES, plays an essential role in assisting protein folding. The GroEL-GroES system forms a nano-cage that allows encapsulation of the non-native substrate proteins and provides a physical environment optimized to promote and accelerate protein folding. The protein is Chaperonin GroEL of Symbiobacterium thermophilum (strain DSM 24528 / JCM 14929 / IAM 14863 / T).